Consider the following 477-residue polypeptide: AAA-ATPase At3g28600 (477 aa).

The N-terminal stretch at methionine 1–proline 26 is a signal peptide. Glycine 245–serine 252 contributes to the ATP binding site.

This sequence belongs to the AAA ATPase family. BCS1 subfamily. The cofactor is Mg(2+).

The enzyme catalyses ATP + H2O = ADP + phosphate + H(+). The sequence is that of AAA-ATPase At3g28600 from Arabidopsis thaliana (Mouse-ear cress).